Reading from the N-terminus, the 129-residue chain is Cytochrome c oxidase subunit 5B, mitochondrial (129 aa).

The transit peptide at M1–M31 directs the protein to the mitochondrion. An N6-acetyllysine mark is found at K68 and K86. C91, C93, C113, and C116 together coordinate Zn(2+). The residue at position 121 (K121) is an N6-acetyllysine.

Belongs to the cytochrome c oxidase subunit 5B family. Component of the cytochrome c oxidase (complex IV, CIV), a multisubunit enzyme composed of 14 subunits. The complex is composed of a catalytic core of 3 subunits MT-CO1, MT-CO2 and MT-CO3, encoded in the mitochondrial DNA, and 11 supernumerary subunits COX4I1 (or COX4I2), COX5A, COX5B, COX6A2 (or COX6A1), COX6B1 (or COX6B2), COX6C, COX7A1 (or COX7A2), COX7B, COX7C, COX8B and NDUFA4, which are encoded in the nuclear genome. The complex exists as a monomer or a dimer and forms supercomplexes (SCs) in the inner mitochondrial membrane with NADH-ubiquinone oxidoreductase (complex I, CI) and ubiquinol-cytochrome c oxidoreductase (cytochrome b-c1 complex, complex III, CIII), resulting in different assemblies (supercomplex SCI(1)III(2)IV(1) and megacomplex MCI(2)III(2)IV(2)).

It is found in the mitochondrion inner membrane. Its pathway is energy metabolism; oxidative phosphorylation. Component of the cytochrome c oxidase, the last enzyme in the mitochondrial electron transport chain which drives oxidative phosphorylation. The respiratory chain contains 3 multisubunit complexes succinate dehydrogenase (complex II, CII), ubiquinol-cytochrome c oxidoreductase (cytochrome b-c1 complex, complex III, CIII) and cytochrome c oxidase (complex IV, CIV), that cooperate to transfer electrons derived from NADH and succinate to molecular oxygen, creating an electrochemical gradient over the inner membrane that drives transmembrane transport and the ATP synthase. Cytochrome c oxidase is the component of the respiratory chain that catalyzes the reduction of oxygen to water. Electrons originating from reduced cytochrome c in the intermembrane space (IMS) are transferred via the dinuclear copper A center (CU(A)) of subunit 2 and heme A of subunit 1 to the active site in subunit 1, a binuclear center (BNC) formed by heme A3 and copper B (CU(B)). The BNC reduces molecular oxygen to 2 water molecules using 4 electrons from cytochrome c in the IMS and 4 protons from the mitochondrial matrix. The chain is Cytochrome c oxidase subunit 5B, mitochondrial (COX5B) from Bos taurus (Bovine).